The primary structure comprises 378 residues: Apolipoprotein A-IV (378 aa).

The N-terminal stretch at M1–A20 is a signal peptide. 13 consecutive repeat copies span residues D33 to L54, S60 to W81, E82 to G98, P110 to G130, P131 to T152, S153 to T174, P175 to T196, P197 to A218, P219 to K240, K241 to A262, P263 to H280, K281 to G302, and P303 to G324. The interval D33 to G324 is 13 X 22 AA approximate tandem repeats. The interval E354–S378 is disordered.

It belongs to the apolipoprotein A1/A4/E family. Homodimer.

The protein resides in the secreted. Its function is as follows. May have a role in chylomicrons and VLDL secretion and catabolism. Required for efficient activation of lipoprotein lipase by ApoC-II; potent activator of LCAT. Apoa-IV is a major component of HDL and chylomicrons. This Canis lupus familiaris (Dog) protein is Apolipoprotein A-IV.